A 293-amino-acid polypeptide reads, in one-letter code: MWICPGGGGGGGGGGGGGDREDARPAPLCCGRCWRSGCAARPPRMCRDGYEPCVNEGMCVTYHNGTGYCKCPEGFLGEYCQHRDPCEKNRCQNGGTCVAQAMLGKATCRCASGFTGEDCQYSTSHPCFVSRPCLNGGTCHMLSRDTYECTCQVGFTGKECQWTDACLSHPCANGSTCTTVANQFSCKCLTGFTGQKCETDVNECDIPGHCQHGGTCLNLPGSYQCQCLQGFTGQYCDSLYVPCAPSPCVNGGTCRQTGDFTFECNCLPETVRRGTELWERDREVWNGKEHDEN.

EGF-like domains are found at residues 42-81, 82-120, 123-161, and 162-198; these read PPRM…EYCQ, HRDP…EDCQ, TSHP…KECQ, and WTDA…QKCE. Cystine bridges form between Cys-46–Cys-59, Cys-53–Cys-69, Cys-71–Cys-80, Cys-86–Cys-97, Cys-91–Cys-108, Cys-110–Cys-119, Cys-127–Cys-139, Cys-133–Cys-149, Cys-151–Cys-160, Cys-166–Cys-177, Cys-171–Cys-186, Cys-188–Cys-197, Cys-204–Cys-216, Cys-210–Cys-225, Cys-227–Cys-236, Cys-243–Cys-254, and Cys-248–Cys-264. Residue Asn-64 is glycosylated (N-linked (GlcNAc...) asparagine). Residue Asn-173 is glycosylated (N-linked (GlcNAc...) asparagine). The EGF-like 5; calcium-binding domain occupies 200 to 237; it reads DVNECDIPGHCQHGGTCLNLPGSYQCQCLQGFTGQYCD. The region spanning 239–276 is the EGF-like 6 domain; it reads LYVPCAPSPCVNGGTCRQTGDFTFECNCLPETVRRGTE.

The protein belongs to the NOTCH family. In terms of assembly, interacts with NOTCH2. Interacts with DLL1; the interaction is direct. As to expression, expressed in radial glia neural stem cells during cortical development.

Its subcellular location is the secreted. In terms of biological role, human-specific protein that promotes neural progenitor proliferation and evolutionary expansion of the brain neocortex by regulating the Notch signaling pathway. Able to promote neural progenitor self-renewal, possibly by down-regulating neuronal differentiation genes, thereby delaying the differentiation of neuronal progenitors and leading to an overall final increase in neuronal production. Acts by enhancing the Notch signaling pathway via two different mechanisms that probably work in parallel to reach the same effect. Enhances Notch signaling pathway in a non-cell-autonomous manner via direct interaction with NOTCH2. Also promotes Notch signaling pathway in a cell-autonomous manner through inhibition of cis DLL1-NOTCH2 interactions, which promotes neuronal differentiation. The polypeptide is Notch homolog 2 N-terminal-like protein C (Homo sapiens (Human)).